Reading from the N-terminus, the 722-residue chain is Probable dipeptidyl-peptidase 5 (722 aa).

Positions 1 to 18 (MGALRWLSLAAAASSALA) are cleaved as a signal peptide. Residues Asn-75, Asn-78, Asn-86, Asn-94, Asn-151, Asn-253, and Asn-448 are each glycosylated (N-linked (GlcNAc...) asparagine). Catalysis depends on Ser-558, which acts as the Charge relay system. N-linked (GlcNAc...) asparagine glycosylation occurs at Asn-605. Catalysis depends on charge relay system residues Asp-641 and His-673.

It belongs to the peptidase S9C family.

The protein resides in the secreted. In terms of biological role, extracellular dipeptidyl-peptidase which removes N-terminal dipeptides sequentially from polypeptides having unsubstituted N-termini. The protein is Probable dipeptidyl-peptidase 5 (dpp5) of Emericella nidulans (strain FGSC A4 / ATCC 38163 / CBS 112.46 / NRRL 194 / M139) (Aspergillus nidulans).